The primary structure comprises 436 residues: UPF0597 protein YhaM (436 aa).

The protein belongs to the UPF0597 family.

This chain is UPF0597 protein YhaM, found in Escherichia coli O7:K1 (strain IAI39 / ExPEC).